Consider the following 422-residue polypeptide: Histidine--tRNA ligase (422 aa).

It belongs to the class-II aminoacyl-tRNA synthetase family. As to quaternary structure, homodimer.

The protein resides in the cytoplasm. It catalyses the reaction tRNA(His) + L-histidine + ATP = L-histidyl-tRNA(His) + AMP + diphosphate + H(+). The polypeptide is Histidine--tRNA ligase (Vibrio campbellii (strain ATCC BAA-1116)).